We begin with the raw amino-acid sequence, 126 residues long: Large ribosomal subunit protein uL14 (126 aa).

This sequence belongs to the universal ribosomal protein uL14 family. As to quaternary structure, part of the 50S ribosomal subunit. Forms a cluster with proteins L3 and L19. In the 70S ribosome, L14 and L19 interact and together make contacts with the 16S rRNA in bridges B5 and B8.

Its function is as follows. Binds to 23S rRNA. Forms part of two intersubunit bridges in the 70S ribosome. This chain is Large ribosomal subunit protein uL14, found in Persephonella marina (strain DSM 14350 / EX-H1).